Reading from the N-terminus, the 357-residue chain is Cobalt-precorrin-5B C(1)-methyltransferase (357 aa).

Belongs to the CbiD family.

The catalysed reaction is Co-precorrin-5B + S-adenosyl-L-methionine = Co-precorrin-6A + S-adenosyl-L-homocysteine. It functions in the pathway cofactor biosynthesis; adenosylcobalamin biosynthesis; cob(II)yrinate a,c-diamide from sirohydrochlorin (anaerobic route): step 6/10. Its function is as follows. Catalyzes the methylation of C-1 in cobalt-precorrin-5B to form cobalt-precorrin-6A. The protein is Cobalt-precorrin-5B C(1)-methyltransferase of Alkaliphilus oremlandii (strain OhILAs) (Clostridium oremlandii (strain OhILAs)).